Consider the following 1730-residue polypeptide: SH3 and multiple ankyrin repeat domains protein 3 (1730 aa).

Positions 1–75 (MDGPGASAVV…KFLDEERLLQ (75 aa)) are intramolecular interaction with the ANK repeats. Tyr-122 carries the phosphotyrosine modification. ANK repeat units follow at residues 148–178 (SGECPLSLAAQLDNATDLLKVLRNGGAHLDF), 182–211 (DGLTAVHCATRQRNAGALTTLLDLGASPDY), 215–245 (RGLTPLYHSALGGGDALCCELLLHDHAQLGT), 249–278 (NGWQEIHQACRFGHVQHLEHLLFYGANMGA), 282–311 (SGNTALHICALYNQESCARVLLFRGANKDV), and 315–345 (NSQTAFQVAIIAGNFELAEVIKTHKDSDVVP). The interval 354–466 (KRRRLAGPSG…PPPRGPKRKL (113 aa)) is disordered. A phosphoserine mark is found at Ser-373, Ser-375, Ser-387, and Ser-394. The span at 404–415 (LQEEKDRDRDGE) shows a compositional bias: basic and acidic residues. Over residues 444–460 (APGPGPASPAPPAPPPR) the composition is skewed to pro residues. In terms of domain architecture, SH3 spans 470-529 (VPGRKFIAVKAHSPQGEGEIPLHRGEAVKVLSIGEGGFWEGTVKGRTGWFPADCVEEVQM). Ser-482 bears the Phosphoserine mark. Residue Tyr-555 is modified to Phosphotyrosine. The region spanning 570–664 (VAILQKRDHE…RLVMKVVSVT (95 aa)) is the PDZ domain. A disordered region spans residues 664–688 (TRKPEEDGARRRAPPPPKRAPSTTL). The segment at 677–684 (PPPPKRAP) is required for interaction with ABI1. Ser-694, Ser-781, Ser-790, and Ser-801 each carry phosphoserine. Disordered stretches follow at residues 760–1460 (QGLP…AAGP) and 1475–1524 (GDPV…SLLD). Over residues 812-844 (IPPPPQTAPPPPPAPYYFDSGPPPTFSPPPPPG) the composition is skewed to pro residues. The span at 857-869 (GLEARLGAGAAGL) shows a compositional bias: low complexity. Ser-890 and Ser-897 each carry phosphoserine. Thr-912 is subject to Phosphothreonine. Phosphotyrosine is present on Tyr-930. Asymmetric dimethylarginine is present on Arg-965. Phosphoserine is present on Ser-995. A compositionally biased stretch (basic and acidic residues) spans 1016–1026 (VKERRLEERRR). Positions 1078–1092 (LKPLVGGPSLGPSGS) are enriched in low complexity. Over residues 1122 to 1131 (SQTPSRSPTP) the composition is skewed to polar residues. Residue Thr-1130 is modified to Phosphothreonine. 4 positions are modified to phosphoserine: Ser-1134, Ser-1159, Ser-1163, and Ser-1166. Residues 1174-1194 (ARREAEKPPREERKSPEDKKS) show a composition bias toward basic and acidic residues. Thr-1234 bears the Phosphothreonine mark. Low complexity predominate over residues 1235–1250 (PELAPAPMQAAAVAEP). 2 stretches are compositionally biased toward pro residues: residues 1251-1261 (MPSPRAQPPGS) and 1321-1333 (TPPPGPGPLPTTV). Residue Ser-1253 is modified to Phosphoserine. Positions 1360–1370 (ADTRSSSDPHL) are enriched in basic and acidic residues. A compositionally biased stretch (low complexity) spans 1371–1392 (ETTSTISTVSSMSTLSSESGEL). Residues 1410-1416 (PPVPPKP) carry the SH3-binding motif. Ser-1420 carries the post-translational modification Phosphoserine. A coiled-coil region spans residues 1494–1514 (ISELSSRLQQLNKDTRSLGEE). Residues 1495–1505 (SELSSRLQQLN) are compositionally biased toward polar residues. Ser-1510, Ser-1521, Ser-1529, and Ser-1539 each carry phosphoserine. Disordered regions lie at residues 1546–1584 (ISAQRSPGGPGGGASYSVRPSGRYPVARRAPSPVKPASL) and 1627–1663 (VRSVSARSRSPSPSPLPSPSPGSGPSAGPRRPFQQKP). Low complexity predominate over residues 1627-1637 (VRSVSARSRSP). A phosphoserine mark is found at Ser-1634, Ser-1636, and Ser-1638. The segment covering 1638–1648 (SPSPLPSPSPG) has biased composition (pro residues). Residues 1649 to 1658 (SGPSAGPRRP) are compositionally biased toward low complexity. One can recognise an SAM domain in the interval 1667–1730 (WSKFDVGDWL…ERALRQLDGS (64 aa)).

It belongs to the SHANK family. As to quaternary structure, may homomultimerize via its SAM domain. Interacts with BAIAP2, DBNL and SLC17A7/VGLUT1. Interacts with DLGAP1/GKAP, GRM1/MGLUR1, GRM5/MGLUR5 and LZTS3 C-termini via its PDZ domain. Interacts with ABI1, HOMER1, HOMER2, HOMER3 and CTTN/cortactin SH3 domain. Is part of a complex with DLG4/PSD-95 and DLGAP1/GKAP. Interacts (via PDZ domain) with the GRIA1 subunit of the AMPA receptor (via PDZ-binding motif). Interacts with WASF1 and CYFIP2; the interactions mediate the association of SHANK3 with the WAVE1 complex. Interacts with ARPC2; the interaction probably mediates the association of SHANK3 with the Arp2/3 complex. Interacts (via ANK repeats) with SHARPIN and SPTAN1. Interacts (via PDZ domain) with ARHGAP44 (probably via PDZ-binding motif); the interaction takes place in dendritic spines and promotes GRIA1 exocytosis. Interacts with CAMK2A. Interacts with DIP2A. Interacts with ADGRL3. In brain, highly expressed in striatum, thalamus, hippocampus and granule cells of the cerebellum.

It localises to the cytoplasm. Its subcellular location is the synapse. It is found in the postsynaptic density. The protein resides in the cell projection. The protein localises to the dendritic spine. Functionally, major scaffold postsynaptic density protein which interacts with multiple proteins and complexes to orchestrate the dendritic spine and synapse formation, maturation and maintenance. Interconnects receptors of the postsynaptic membrane including NMDA-type and metabotropic glutamate receptors via complexes with GKAP/PSD-95 and HOMER, respectively, and the actin-based cytoskeleton. Plays a role in the structural and functional organization of the dendritic spine and synaptic junction through the interaction with Arp2/3 and WAVE1 complex as well as the promotion of the F-actin clusters. By way of this control of actin dynamics, participates in the regulation of developing neurons growth cone motility and the NMDA receptor-signaling. Also modulates GRIA1 exocytosis and GRM5/MGLUR5 expression and signaling to control the AMPA and metabotropic glutamate receptor-mediated synaptic transmission and plasticity. May be required at an early stage of synapse formation and be inhibited by IGF1 to promote synapse maturation. This chain is SH3 and multiple ankyrin repeat domains protein 3 (Shank3), found in Mus musculus (Mouse).